A 128-amino-acid chain; its full sequence is CD59 glycoprotein (128 aa).

Positions Met1–Ser25 are cleaved as a signal peptide. A UPAR/Ly6 domain is found at Leu26–Ser108. Intrachain disulfides connect Cys28–Cys51, Cys31–Cys38, Cys44–Cys64, Cys70–Cys88, and Cys89–Cys94. Asn43 carries an N-linked (GlcNAc...) asparagine glycan. A lipid anchor (GPI-anchor amidated asparagine) is attached at Asn102. Positions Gly103 to Pro128 are cleaved as a propeptide — removed in mature form.

In terms of assembly, interacts with T-cell surface antigen CD2. In terms of processing, N- and O-glycosylated.

Its subcellular location is the cell membrane. The protein localises to the secreted. In terms of biological role, potent inhibitor of the complement membrane attack complex (MAC) action, which protects self-cells from damage during complement activation. Acts by binding to the beta-haipins of C8 (C8A and C8B) components of the assembling MAC, forming an intermolecular beta-sheet that prevents incorporation of the multiple copies of C9 required for complete formation of the osmolytic pore. In Chlorocebus aethiops (Green monkey), this protein is CD59 glycoprotein.